Reading from the N-terminus, the 199-residue chain is Putative AgrB-like protein (199 aa).

5 helical membrane passes run 43–63 (IIIF…FSFI), 81–101 (YGCL…TRLF), 108–128 (FYIV…PCPN), 139–159 (LKIL…LSPL), and 165–185 (ILIS…KGVI).

Belongs to the AgrB family.

It localises to the cell membrane. In terms of biological role, may be involved in the proteolytic processing of a quorum sensing system signal molecule precursor. This chain is Putative AgrB-like protein (cfg02), found in Clostridium beijerinckii (Clostridium MP).